Consider the following 472-residue polypeptide: 3-isopropylmalate dehydratase large subunit (472 aa).

Residues cysteine 353, cysteine 414, and cysteine 417 each contribute to the [4Fe-4S] cluster site.

This sequence belongs to the aconitase/IPM isomerase family. LeuC type 1 subfamily. Heterodimer of LeuC and LeuD. [4Fe-4S] cluster serves as cofactor.

The enzyme catalyses (2R,3S)-3-isopropylmalate = (2S)-2-isopropylmalate. It participates in amino-acid biosynthesis; L-leucine biosynthesis; L-leucine from 3-methyl-2-oxobutanoate: step 2/4. Catalyzes the isomerization between 2-isopropylmalate and 3-isopropylmalate, via the formation of 2-isopropylmaleate. This Psychrobacter arcticus (strain DSM 17307 / VKM B-2377 / 273-4) protein is 3-isopropylmalate dehydratase large subunit.